The sequence spans 87 residues: Cytochrome c6 (87 aa).

Heme c is bound by residues C10, C13, H14, and M56.

The protein belongs to the cytochrome c family. PetJ subfamily. Monomer. Post-translationally, binds 1 heme c group covalently per subunit.

It localises to the plastid. It is found in the chloroplast thylakoid lumen. Functionally, functions as an electron carrier between membrane-bound cytochrome b6-f and photosystem I in oxygenic photosynthesis. This is Cytochrome c6 (petJ) from Euglena gracilis.